Here is a 284-residue protein sequence, read N- to C-terminus: Plastid-lipid-associated protein 6, chloroplastic (284 aa).

Positions 1–11 are enriched in low complexity; that stretch reads MATSSTFSSLL. Positions 1-47 are disordered; the sequence is MATSSTFSSLLPSPPALLSDHRSPPPSIRYSFSPLTTPKSSRLGFTV. The N-terminal 72 residues, 1–72, are a transit peptide targeting the chloroplast; that stretch reads MATSSTFSSL…SIGGESDPPP (72 aa). 5 positions are modified to phosphoserine: Ser96, Ser105, Ser148, Ser151, and Ser155.

It belongs to the PAP/fibrillin family. Part of the Photosystem II light-harvesting complex (LHCII). Phosphorylated as part of a basal defense response.

It localises to the plastid. The protein localises to the chloroplast. The protein resides in the plastoglobule. Functionally, required for plastoglobule development and resistance to multiple stresses. Regulates plastoglobule osmiophilic content. May be involved in the transport of lipophilic antioxidants in and out of the plastoglobule. The chain is Plastid-lipid-associated protein 6, chloroplastic from Arabidopsis thaliana (Mouse-ear cress).